We begin with the raw amino-acid sequence, 554 residues long: Hydroxylamine reductase (554 aa).

4 residues coordinate [2Fe-2S] cluster: Cys3, Cys6, Cys18, and Cys25. His252, Glu276, Cys320, Cys408, Cys436, Cys461, Glu495, and Lys497 together coordinate hybrid [4Fe-2O-2S] cluster. Cys408 bears the Cysteine persulfide mark.

It belongs to the HCP family. The cofactor is [2Fe-2S] cluster. Requires hybrid [4Fe-2O-2S] cluster as cofactor.

Its subcellular location is the cytoplasm. The catalysed reaction is A + NH4(+) + H2O = hydroxylamine + AH2 + H(+). Functionally, catalyzes the reduction of hydroxylamine to form NH(3) and H(2)O. The protein is Hydroxylamine reductase of Shewanella baltica (strain OS223).